The sequence spans 466 residues: 3-isopropylmalate dehydratase large subunit (466 aa).

The [4Fe-4S] cluster site is built by cysteine 347, cysteine 407, and cysteine 410.

This sequence belongs to the aconitase/IPM isomerase family. LeuC type 1 subfamily. In terms of assembly, heterodimer of LeuC and LeuD. Requires [4Fe-4S] cluster as cofactor.

It carries out the reaction (2R,3S)-3-isopropylmalate = (2S)-2-isopropylmalate. It functions in the pathway amino-acid biosynthesis; L-leucine biosynthesis; L-leucine from 3-methyl-2-oxobutanoate: step 2/4. Catalyzes the isomerization between 2-isopropylmalate and 3-isopropylmalate, via the formation of 2-isopropylmaleate. This Serratia proteamaculans (strain 568) protein is 3-isopropylmalate dehydratase large subunit.